The chain runs to 693 residues: MAKEFLIELGTEELPPTQLRTLAEAFAANFEAELKGAELTHEGVKWYAAPRRLALKVTALAEHQADKIVEKRGPAVSAAFDAEGNATKAAQGWARGCGITVDQAERMITDKGEWLLFKQEVKGQPTADIVVELAAKALAGLPIAKPMRWGNKTTQFIRPVKTLTMLMGSDLIQGEILGVASDRVIRGHRFMGEREFTIESAEQYPAILEERGKVMADYEMRKAIILADAQKAAAAIGGIADLEDDLVEEVTSLVEWPVVLTAKFEEEFLKVPAEALVYTMKGDQKYFPVYTEDKQLLPNFIFVSNIESKEPRYVIEGNEKVVRPRLADAEFFFNTDRKSKLIDRLPMLENAIFQQQLGTIKDKTDRITELAGYIAEQIGADVEKSKRAGLLAKCDLMTSMVFEFTDTQGVMGMHYARHDGEAEEVALALNEQYMPRFAGDDLPSNGVSAAVAMADKLDTIVGIFGIGQAPKGSDPFALRRASLGVLRIIVEYGYNLDLVDLVAKAKSLFAQQDGTSRLTNDNVEQEVIEFMLGRFRAWYQDEGFSVDIIQAVLARRPTKPADFDQRVKAVSHFRELEAAEALAAANKRVGNILAKFDGELAAEIDLALLQEDAEKVLAENVEVMTEALEPAFATGNYQEALSKLADLREPVDAFFDNVMVMADDEALKTNRLTLLNNLRNLFLQIADISLLQK.

The protein belongs to the class-II aminoacyl-tRNA synthetase family. Tetramer of two alpha and two beta subunits.

The protein localises to the cytoplasm. The enzyme catalyses tRNA(Gly) + glycine + ATP = glycyl-tRNA(Gly) + AMP + diphosphate. The protein is Glycine--tRNA ligase beta subunit of Vibrio vulnificus (strain YJ016).